Consider the following 196-residue polypeptide: GTP cyclohydrolase-2 (196 aa).

49-53 is a GTP binding site; the sequence is RVHSE. C54, C65, and C67 together coordinate Zn(2+). GTP-binding positions include Q70, 92–94, and T114; that span reads EGR. D126 serves as the catalytic Proton acceptor. Residue R128 is the Nucleophile of the active site. 2 residues coordinate GTP: T149 and K154.

Belongs to the GTP cyclohydrolase II family. In terms of assembly, homodimer. Requires Zn(2+) as cofactor.

It catalyses the reaction GTP + 4 H2O = 2,5-diamino-6-hydroxy-4-(5-phosphoribosylamino)-pyrimidine + formate + 2 phosphate + 3 H(+). The protein operates within cofactor biosynthesis; riboflavin biosynthesis; 5-amino-6-(D-ribitylamino)uracil from GTP: step 1/4. Catalyzes the conversion of GTP to 2,5-diamino-6-ribosylamino-4(3H)-pyrimidinone 5'-phosphate (DARP), formate and pyrophosphate. The chain is GTP cyclohydrolase-2 from Citrobacter koseri (strain ATCC BAA-895 / CDC 4225-83 / SGSC4696).